The primary structure comprises 588 residues: Calicin (588 aa).

In terms of domain architecture, BTB spans 12 to 124; it reads SFVLQNLNRQ…RLRVHCNDFL (113 aa). In terms of domain architecture, BACK spans 133 to 235; it reads CLRYLFLAEL…NAVSNKTLVF (103 aa). A Phosphoserine modification is found at serine 149. Kelch repeat units lie at residues 280-327, 328-375, 377-423, 425-475, 476-525, and 526-580; these read SVVI…SAGR, YIYI…TCGG, VYSV…TKGD, HLYI…SFQQ, DNIL…IGDS, and KVFV…LAKL.

Interacts with CYLC1; the interaction may be relevant for proper acrosome attachment to the nuclear envelope. In terms of tissue distribution, expressed in testis, in spermatozoa (at protein level).

It localises to the cytoplasm. The protein localises to the cytoskeleton. The protein resides in the perinuclear theca. It is found in the calyx. Required for both nuclear and acrosomal shaping during spermiogenesis. This Homo sapiens (Human) protein is Calicin (CCIN).